The primary structure comprises 180 residues: D(1A) dopamine receptor (180 aa).

The helical transmembrane segment at 1–10 (NTLLVCAAVI) threads the bilayer. Topologically, residues 11-21 (RFRHLRSKVTN) are cytoplasmic. The helical transmembrane segment at 22-48 (FFVISLAVSDLLVAVLVMPWKAVAEIA) threads the bilayer. Topologically, residues 49 to 57 (GFWPFGSFC) are extracellular. The cysteines at positions 57 and 147 are disulfide-linked. A helical transmembrane segment spans residues 58–80 (NIWVAFDIMCSTASILNLCVISV). Residues 81-99 (DRYWAISSPFRYERKMTPK) are Cytoplasmic-facing. Residues 100–124 (AAFILIGVAWTLSVLISFIPVQLSW) form a helical membrane-spanning segment. At 125–153 (HKAKPTSPPDGNATSLDETVDNCDSSLSR) the chain is on the extracellular side. The N-linked (GlcNAc...) asparagine glycan is linked to Asn-136. Residues 154-179 (TYSISSSLVNFYNPVAIMXVTYTRIH) traverse the membrane as a helical segment. A topological domain (cytoplasmic) is located at residue Arg-180.

This sequence belongs to the G-protein coupled receptor 1 family. As to quaternary structure, interacts with DNAJC14 via its C-terminus. Interacts with DRD2. Interacts with DORIP1.

It is found in the cell membrane. The protein localises to the endoplasmic reticulum membrane. It localises to the cell projection. Its subcellular location is the cilium membrane. In terms of biological role, dopamine receptor whose activity is mediated by G proteins which activate adenylyl cyclase. The polypeptide is D(1A) dopamine receptor (DRD1) (Oryctolagus cuniculus (Rabbit)).